Consider the following 218-residue polypeptide: Small ribosomal subunit protein uS3c (218 aa).

The region spanning 47–118 (VQKEMRISSG…RLNVVITRVA (72 aa)) is the KH type-2 domain.

It belongs to the universal ribosomal protein uS3 family. In terms of assembly, part of the 30S ribosomal subunit.

It localises to the plastid. It is found in the chloroplast. The polypeptide is Small ribosomal subunit protein uS3c (rps3) (Ceratophyllum demersum (Rigid hornwort)).